The chain runs to 144 residues: HTH-type transcriptional repressor NsrR (144 aa).

The HTH rrf2-type domain maps to 2–129 (QLTSFTDYGL…DKHTLLSLID (128 aa)). A DNA-binding region (H-T-H motif) is located at residues 28 to 51 (ISKVTEVYGVSRNHMVKIINKLGQ). [2Fe-2S] cluster is bound by residues C91, C96, and C102.

Requires [2Fe-2S] cluster as cofactor.

In terms of biological role, nitric oxide-sensitive repressor of genes involved in protecting the cell against nitrosative stress. May require iron for activity. In Photobacterium profundum (strain SS9), this protein is HTH-type transcriptional repressor NsrR.